The sequence spans 121 residues: Small ribosomal subunit protein uS13 (121 aa).

Residues 94–121 form a disordered region; it reads DLPVRGQRTKTNARTRKGPRKSGVQLKK. Basic residues predominate over residues 100–121; that stretch reads QRTKTNARTRKGPRKSGVQLKK.

This sequence belongs to the universal ribosomal protein uS13 family. Part of the 30S ribosomal subunit. Forms a loose heterodimer with protein S19. Forms two bridges to the 50S subunit in the 70S ribosome.

Its function is as follows. Located at the top of the head of the 30S subunit, it contacts several helices of the 16S rRNA. In the 70S ribosome it contacts the 23S rRNA (bridge B1a) and protein L5 of the 50S subunit (bridge B1b), connecting the 2 subunits; these bridges are implicated in subunit movement. Contacts the tRNAs in the A and P-sites. In Polynucleobacter necessarius subsp. necessarius (strain STIR1), this protein is Small ribosomal subunit protein uS13.